The primary structure comprises 278 residues: NAD-dependent protein deacylase (278 aa).

Residues 22–270 (RSRIFHRDSA…PEYIREFLTT (249 aa)) enclose the Deacetylase sirtuin-type domain. 46–65 (GAGISAESGIRTFRADDGLW) contributes to the NAD(+) binding site. 2 residues coordinate substrate: Y90 and R93. An NAD(+)-binding site is contributed by 127 to 130 (QNID). The active-site Proton acceptor is H145. Zn(2+) contacts are provided by C153 and C172. Residues 212–214 (GTS), 238–240 (NLE), and A256 each bind NAD(+).

It belongs to the sirtuin family. Class III subfamily. The cofactor is Zn(2+).

The protein resides in the cytoplasm. It carries out the reaction N(6)-acetyl-L-lysyl-[protein] + NAD(+) + H2O = 2''-O-acetyl-ADP-D-ribose + nicotinamide + L-lysyl-[protein]. It catalyses the reaction N(6)-succinyl-L-lysyl-[protein] + NAD(+) + H2O = 2''-O-succinyl-ADP-D-ribose + nicotinamide + L-lysyl-[protein]. The enzyme catalyses N(6)-(2-hydroxyisobutanoyl)-L-lysyl-[protein] + NAD(+) + H2O = 2''-O-(2-hydroxyisobutanoyl)-ADP-D-ribose + nicotinamide + L-lysyl-[protein]. In terms of biological role, NAD-dependent lysine deacetylase that specifically removes acetyl groups on target proteins. Also acts as a protein-lysine deacylase by mediating protein desuccinylation and de-2-hydroxyisobutyrylation. Modulates the activities of several proteins which are inactive in their acylated form. This is NAD-dependent protein deacylase from Yersinia pestis.